Here is a 706-residue protein sequence, read N- to C-terminus: Acyl-coenzyme A oxidase (706 aa).

Residues 682–706 (MLNRPSKEERERFEKSTETAKILSK) form a disordered region. Over residues 686-699 (PSKEERERFEKSTE) the composition is skewed to basic and acidic residues.

The protein belongs to the acyl-CoA oxidase family. FAD serves as cofactor.

The protein resides in the peroxisome. It carries out the reaction a 2,3-saturated acyl-CoA + O2 = a (2E)-enoyl-CoA + H2O2. Its pathway is lipid metabolism; peroxisomal fatty acid beta-oxidation. In Debaryomyces hansenii (strain ATCC 36239 / CBS 767 / BCRC 21394 / JCM 1990 / NBRC 0083 / IGC 2968) (Yeast), this protein is Acyl-coenzyme A oxidase (POX1).